We begin with the raw amino-acid sequence, 194 residues long: Casparian strip membrane protein 2 (194 aa).

Over 1 to 32 the chain is Cytoplasmic; the sequence is MSTTIDIPESSKVVKGKGVVAAPLRPGGWKKG. Residues 33–53 form a helical membrane-spanning segment; sequence VAIMDFILRLGAIAAALGAAA. At 54–82 the chain is on the extracellular side; it reads TMGTSDQTLPFFTQFFQFEASYDSFTTFQ. The chain crosses the membrane as a helical span at residues 83-103; that stretch reads FFVITMALVGGYLVLSLPFSV. Residues 104–115 are Cytoplasmic-facing; that stretch reads VAIIRPHAVGPR. The chain crosses the membrane as a helical span at residues 116–136; that stretch reads LFLIILDTVFLTLATASAASA. Residues 137 to 168 lie on the Extracellular side of the membrane; the sequence is AAVVYLAHNGDQDTNWLAICNQFGDFCAQTSS. The chain crosses the membrane as a helical span at residues 169-189; that stretch reads AVVSSFVAVVVFVLLIVMSAL. The Cytoplasmic portion of the chain corresponds to 190–194; that stretch reads AMGKP.

It belongs to the Casparian strip membrane proteins (CASP) family. In terms of assembly, homodimer and heterodimers.

It localises to the cell membrane. Regulates membrane-cell wall junctions and localized cell wall deposition. Required for establishment of the Casparian strip membrane domain (CSD) and the subsequent formation of Casparian strips, a cell wall modification of the root endodermis that determines an apoplastic barrier between the intraorganismal apoplasm and the extraorganismal apoplasm and prevents lateral diffusion. The polypeptide is Casparian strip membrane protein 2 (Vigna unguiculata (Cowpea)).